Reading from the N-terminus, the 557-residue chain is Glypican-4 (557 aa).

The first 18 residues, 1 to 18 (MARLGLLALLCTLAALSA), serve as a signal peptide directing secretion. The residue at position 357 (Ser357) is a Phosphoserine. Residues Ser494, Ser498, and Ser500 are each glycosylated (O-linked (Xyl...) (glycosaminoglycan) serine). The N-linked (GlcNAc...) asparagine glycan is linked to Asn514. Ser529 carries GPI-anchor amidated serine lipidation. Residues 530 to 557 (AGGAHAEAKPYLLAALCILFLAVQGEWR) constitute a propeptide, removed in mature form.

Belongs to the glypican family. As to expression, highly expressed in developing brain and kidney.

The protein localises to the cell membrane. The protein resides in the secreted. It localises to the extracellular space. In terms of biological role, cell surface proteoglycan that bears heparan sulfate. May be involved in the development of kidney tubules and of the central nervous system. This Mus musculus (Mouse) protein is Glypican-4 (Gpc4).